The primary structure comprises 520 residues: GMP synthase [glutamine-hydrolyzing] (520 aa).

In terms of domain architecture, Glutamine amidotransferase type-1 spans 9 to 202 (TILIIDFGSQ…VHRIVGVKPG (194 aa)). The active-site Nucleophile is C86. Active-site residues include H176 and E178. The GMPS ATP-PPase domain maps to 203–395 (WTMGAYREQA…LGLPDSFIGR (193 aa)). 230 to 236 (SGGVDSS) serves as a coordination point for ATP.

Homodimer.

The enzyme catalyses XMP + L-glutamine + ATP + H2O = GMP + L-glutamate + AMP + diphosphate + 2 H(+). The protein operates within purine metabolism; GMP biosynthesis; GMP from XMP (L-Gln route): step 1/1. Functionally, catalyzes the synthesis of GMP from XMP. This Brucella canis (strain ATCC 23365 / NCTC 10854 / RM-666) protein is GMP synthase [glutamine-hydrolyzing].